The chain runs to 155 residues: MPKGSGKVIAQNKKAFHDYFIEETYEAGLVLQGTEIKSIRAGRVNLKDAFARVHNGEVWVHNMHISTYEQGNRFNHDPLRTRKLLLHKKEIDKLAGAAKETGYALVPLKIYLKNGFAKMALGLAKGKKQYDKRHDLKEKEAKREIARAFRDRQKM.

Belongs to the SmpB family.

The protein localises to the cytoplasm. Functionally, required for rescue of stalled ribosomes mediated by trans-translation. Binds to transfer-messenger RNA (tmRNA), required for stable association of tmRNA with ribosomes. tmRNA and SmpB together mimic tRNA shape, replacing the anticodon stem-loop with SmpB. tmRNA is encoded by the ssrA gene; the 2 termini fold to resemble tRNA(Ala) and it encodes a 'tag peptide', a short internal open reading frame. During trans-translation Ala-aminoacylated tmRNA acts like a tRNA, entering the A-site of stalled ribosomes, displacing the stalled mRNA. The ribosome then switches to translate the ORF on the tmRNA; the nascent peptide is terminated with the 'tag peptide' encoded by the tmRNA and targeted for degradation. The ribosome is freed to recommence translation, which seems to be the essential function of trans-translation. In Bacillus cereus (strain ATCC 10987 / NRS 248), this protein is SsrA-binding protein.